The sequence spans 311 residues: NAD kinase (311 aa).

Residue D88 is the Proton acceptor of the active site. NAD(+) is bound by residues 88–89, 162–163, R190, D192, V200, and 203–208; these read DG, NE, and TAHNLS.

It belongs to the NAD kinase family. Requires a divalent metal cation as cofactor.

It is found in the cytoplasm. The catalysed reaction is NAD(+) + ATP = ADP + NADP(+) + H(+). Involved in the regulation of the intracellular balance of NAD and NADP, and is a key enzyme in the biosynthesis of NADP. Catalyzes specifically the phosphorylation on 2'-hydroxyl of the adenosine moiety of NAD to yield NADP. In Rhodopirellula baltica (strain DSM 10527 / NCIMB 13988 / SH1), this protein is NAD kinase.